The sequence spans 396 residues: GTPase Obg (396 aa).

An Obg domain is found at 1–159 (MKFVDEASIY…RTLKLEMKVL (159 aa)). Residues 120-146 (GGHHGLGNTRFKSSTNRAPRQTTKGTV) form a disordered region. Over residues 129-144 (RFKSSTNRAPRQTTKG) the composition is skewed to polar residues. Positions 160 to 333 (ADVGLLGLPN…LCLDLMTALD (174 aa)) constitute an OBG-type G domain. GTP contacts are provided by residues 166 to 173 (GLPNAGKS), 191 to 195 (FTTLV), 213 to 216 (DIPG), 283 to 286 (NKTD), and 314 to 316 (SAI). Mg(2+) is bound by residues Ser173 and Thr193.

This sequence belongs to the TRAFAC class OBG-HflX-like GTPase superfamily. OBG GTPase family. As to quaternary structure, monomer. Mg(2+) is required as a cofactor.

The protein localises to the cytoplasm. Functionally, an essential GTPase which binds GTP, GDP and possibly (p)ppGpp with moderate affinity, with high nucleotide exchange rates and a fairly low GTP hydrolysis rate. Plays a role in control of the cell cycle, stress response, ribosome biogenesis and in those bacteria that undergo differentiation, in morphogenesis control. In Marinomonas sp. (strain MWYL1), this protein is GTPase Obg.